We begin with the raw amino-acid sequence, 393 residues long: Arginine biosynthesis bifunctional protein ArgJ 3 (393 aa).

Positions 148, 170, 181, 260, 388, and 393 each coordinate substrate. Residue Thr181 is the Nucleophile of the active site.

It belongs to the ArgJ family. As to quaternary structure, heterotetramer of two alpha and two beta chains.

It localises to the cytoplasm. The enzyme catalyses N(2)-acetyl-L-ornithine + L-glutamate = N-acetyl-L-glutamate + L-ornithine. It catalyses the reaction L-glutamate + acetyl-CoA = N-acetyl-L-glutamate + CoA + H(+). It functions in the pathway amino-acid biosynthesis; L-arginine biosynthesis; L-ornithine and N-acetyl-L-glutamate from L-glutamate and N(2)-acetyl-L-ornithine (cyclic): step 1/1. Its pathway is amino-acid biosynthesis; L-arginine biosynthesis; N(2)-acetyl-L-ornithine from L-glutamate: step 1/4. Functionally, catalyzes two activities which are involved in the cyclic version of arginine biosynthesis: the synthesis of N-acetylglutamate from glutamate and acetyl-CoA as the acetyl donor, and of ornithine by transacetylation between N(2)-acetylornithine and glutamate. The polypeptide is Arginine biosynthesis bifunctional protein ArgJ 3 (Streptomyces clavuligerus).